The following is a 116-amino-acid chain: Large ribosomal subunit protein bL19 (116 aa).

It belongs to the bacterial ribosomal protein bL19 family.

Its function is as follows. This protein is located at the 30S-50S ribosomal subunit interface and may play a role in the structure and function of the aminoacyl-tRNA binding site. This Chloroflexus aggregans (strain MD-66 / DSM 9485) protein is Large ribosomal subunit protein bL19.